Reading from the N-terminus, the 372-residue chain is Germination protease (372 aa).

A propeptide spanning residues 1–15 is cleaved from the precursor; that stretch reads MVKELNLEQYNVRTD.

Belongs to the peptidase A25 family. In terms of assembly, homotetramer. Autoproteolytically processed. The inactive tetrameric zymogen termed p46 autoprocesses to a smaller form termed p41, which is active only during spore germination.

The enzyme catalyses Endopeptidase action with P4 Glu or Asp, P1 preferably Glu &gt; Asp, P1' hydrophobic and P2' Ala.. Initiates the rapid degradation of small, acid-soluble proteins during spore germination. This Halalkalibacterium halodurans (strain ATCC BAA-125 / DSM 18197 / FERM 7344 / JCM 9153 / C-125) (Bacillus halodurans) protein is Germination protease.